We begin with the raw amino-acid sequence, 265 residues long: Flap endonuclease Xni (265 aa).

Residue Asp-111 participates in Mg(2+) binding. The 5'-3' exonuclease domain occupies 167 to 260 (VVPAQLVDFW…NLREIRYPPA (94 aa)). The K(+) site is built by Leu-178, Val-189, and Ile-192. The interval 191 to 196 (GIGPKT) is interaction with DNA.

Belongs to the Xni family. Mg(2+) serves as cofactor. Requires K(+) as cofactor.

Has flap endonuclease activity. During DNA replication, flap endonucleases cleave the 5'-overhanging flap structure that is generated by displacement synthesis when DNA polymerase encounters the 5'-end of a downstream Okazaki fragment. The sequence is that of Flap endonuclease Xni from Aeromonas salmonicida (strain A449).